Here is a 236-residue protein sequence, read N- to C-terminus: Small ribosomal subunit protein uS3 (236 aa).

The KH type-2 domain occupies 39–107 (IRSYVMEELK…ETSLNIVEIR (69 aa)). The interval 214 to 236 (ASEHRATRNDNSSSSLNRRRESV) is disordered.

It belongs to the universal ribosomal protein uS3 family. In terms of assembly, part of the 30S ribosomal subunit. Forms a tight complex with proteins S10 and S14.

Functionally, binds the lower part of the 30S subunit head. Binds mRNA in the 70S ribosome, positioning it for translation. The polypeptide is Small ribosomal subunit protein uS3 (Bartonella bacilliformis (strain ATCC 35685 / KC583 / Herrer 020/F12,63)).